A 140-amino-acid chain; its full sequence is MPWEEIEHTADAAFRVWADTPEDLLVEAAKALFDLITDLDAVEPEEEVEIEAEGGDLVELLHDWLEEIHFRHEIDGMLFSDFEVKELKKEEGWKVRGVARGEPYDPDRHPFHTEVKAVTYHNMKVEREDGRWVAEYVVDL.

Residues Asp-11, Asp-139, and Leu-140 each contribute to the Ca(2+) site.

It belongs to the archease family.

Its function is as follows. Activates the tRNA-splicing ligase complex by facilitating the enzymatic turnover of catalytic subunit RtcB. Acts by promoting the guanylylation of RtcB, a key intermediate step in tRNA ligation. Can also alter the NTP specificity of RtcB such that ATP, dGTP or ITP is used efficiently. The protein is Protein archease of Methanopyrus kandleri (strain AV19 / DSM 6324 / JCM 9639 / NBRC 100938).